Here is a 203-residue protein sequence, read N- to C-terminus: Glycerol-3-phosphate acyltransferase (203 aa).

5 helical membrane-spanning segments follow: residues 5-25 (VLGL…FGVV), 55-75 (KLGI…ILVA), 88-108 (FTVL…WLGF), 114-134 (VATG…AGAV), and 162-182 (FVAH…AALI).

Belongs to the PlsY family. As to quaternary structure, probably interacts with PlsX.

It localises to the cell inner membrane. The catalysed reaction is an acyl phosphate + sn-glycerol 3-phosphate = a 1-acyl-sn-glycero-3-phosphate + phosphate. The protein operates within lipid metabolism; phospholipid metabolism. Its function is as follows. Catalyzes the transfer of an acyl group from acyl-phosphate (acyl-PO(4)) to glycerol-3-phosphate (G3P) to form lysophosphatidic acid (LPA). This enzyme utilizes acyl-phosphate as fatty acyl donor, but not acyl-CoA or acyl-ACP. This is Glycerol-3-phosphate acyltransferase from Anaeromyxobacter sp. (strain Fw109-5).